The primary structure comprises 456 residues: Bifunctional protein GlmU (456 aa).

Residues 1–229 (MLNVVILAAG…GWETLGVNSR (229 aa)) are pyrophosphorylase. Residues 7–10 (LAAG), lysine 21, glutamine 73, 78–79 (GT), 103–105 (YGD), glycine 139, glutamate 154, asparagine 169, and asparagine 227 contribute to the UDP-N-acetyl-alpha-D-glucosamine site. Aspartate 105 serves as a coordination point for Mg(2+). Mg(2+) is bound at residue asparagine 227. The segment at 230–250 (VQQAELERRWQQEQARRQLEA) is linker. An N-acetyltransferase region spans residues 251–456 (GVTLADPARF…EGWQRPQKKS (206 aa)). UDP-N-acetyl-alpha-D-glucosamine is bound by residues arginine 333 and lysine 351. The active-site Proton acceptor is histidine 363. Positions 366 and 377 each coordinate UDP-N-acetyl-alpha-D-glucosamine. Acetyl-CoA is bound by residues alanine 380, 386–387 (NY), serine 405, alanine 423, and arginine 440.

This sequence in the N-terminal section; belongs to the N-acetylglucosamine-1-phosphate uridyltransferase family. It in the C-terminal section; belongs to the transferase hexapeptide repeat family. Homotrimer. Mg(2+) is required as a cofactor.

It localises to the cytoplasm. The catalysed reaction is alpha-D-glucosamine 1-phosphate + acetyl-CoA = N-acetyl-alpha-D-glucosamine 1-phosphate + CoA + H(+). It carries out the reaction N-acetyl-alpha-D-glucosamine 1-phosphate + UTP + H(+) = UDP-N-acetyl-alpha-D-glucosamine + diphosphate. Its pathway is nucleotide-sugar biosynthesis; UDP-N-acetyl-alpha-D-glucosamine biosynthesis; N-acetyl-alpha-D-glucosamine 1-phosphate from alpha-D-glucosamine 6-phosphate (route II): step 2/2. It participates in nucleotide-sugar biosynthesis; UDP-N-acetyl-alpha-D-glucosamine biosynthesis; UDP-N-acetyl-alpha-D-glucosamine from N-acetyl-alpha-D-glucosamine 1-phosphate: step 1/1. The protein operates within bacterial outer membrane biogenesis; LPS lipid A biosynthesis. Its function is as follows. Catalyzes the last two sequential reactions in the de novo biosynthetic pathway for UDP-N-acetylglucosamine (UDP-GlcNAc). The C-terminal domain catalyzes the transfer of acetyl group from acetyl coenzyme A to glucosamine-1-phosphate (GlcN-1-P) to produce N-acetylglucosamine-1-phosphate (GlcNAc-1-P), which is converted into UDP-GlcNAc by the transfer of uridine 5-monophosphate (from uridine 5-triphosphate), a reaction catalyzed by the N-terminal domain. In Bordetella petrii (strain ATCC BAA-461 / DSM 12804 / CCUG 43448), this protein is Bifunctional protein GlmU.